The chain runs to 301 residues: Sulfate adenylyltransferase subunit 2 (301 aa).

It belongs to the PAPS reductase family. CysD subfamily. In terms of assembly, heterodimer composed of CysD, the smaller subunit, and CysN.

The catalysed reaction is sulfate + ATP + H(+) = adenosine 5'-phosphosulfate + diphosphate. It functions in the pathway sulfur metabolism; hydrogen sulfide biosynthesis; sulfite from sulfate: step 1/3. In terms of biological role, with CysN forms the ATP sulfurylase (ATPS) that catalyzes the adenylation of sulfate producing adenosine 5'-phosphosulfate (APS) and diphosphate, the first enzymatic step in sulfur assimilation pathway. APS synthesis involves the formation of a high-energy phosphoric-sulfuric acid anhydride bond driven by GTP hydrolysis by CysN coupled to ATP hydrolysis by CysD. This is Sulfate adenylyltransferase subunit 2 from Shewanella loihica (strain ATCC BAA-1088 / PV-4).